We begin with the raw amino-acid sequence, 557 residues long: 2,3-bisphosphoglycerate-independent phosphoglycerate mutase 1 (557 aa).

Positions 27 and 80 each coordinate Mn(2+). Serine 80 (phosphoserine intermediate) is an active-site residue. Substrate is bound by residues histidine 139, 169 to 170 (RD), arginine 205, arginine 212, 285 to 288 (RADR), and lysine 360. The Mn(2+) site is built by aspartate 429, histidine 433, aspartate 470, histidine 471, and histidine 500.

Belongs to the BPG-independent phosphoglycerate mutase family. In terms of assembly, monomer. Requires Mn(2+) as cofactor.

It is found in the cytoplasm. The enzyme catalyses (2R)-2-phosphoglycerate = (2R)-3-phosphoglycerate. It participates in carbohydrate degradation; glycolysis; pyruvate from D-glyceraldehyde 3-phosphate: step 3/5. Functionally, catalyzes the interconversion of 2-phosphoglycerate (2-PGA) and 3-phosphoglycerate (3-PGA). Required for guard cell function (e.g. blue light-, abscisic acid- (ABA), and low CO(2)-regulated stomatal movements) and fertility (e.g. pollen grains production). This chain is 2,3-bisphosphoglycerate-independent phosphoglycerate mutase 1 (PGM1), found in Arabidopsis thaliana (Mouse-ear cress).